Reading from the N-terminus, the 63-residue chain is Large ribosomal subunit protein uL29 (63 aa).

The protein belongs to the universal ribosomal protein uL29 family.

The protein is Large ribosomal subunit protein uL29 of Flavobacterium johnsoniae (strain ATCC 17061 / DSM 2064 / JCM 8514 / BCRC 14874 / CCUG 350202 / NBRC 14942 / NCIMB 11054 / UW101) (Cytophaga johnsonae).